Consider the following 328-residue polypeptide: Protease HtpX homolog (328 aa).

Helical transmembrane passes span 6–26 (TAMLLAFMTALFMGVGYLIGG) and 28–48 (SGMMIAFVAAAGMNFFSYWNS). Residue H130 coordinates Zn(2+). The active site involves E131. H134 contacts Zn(2+). 2 helical membrane-spanning segments follow: residues 145–165 (ITATLAGAISMLGNFAFFFGG) and 172–192 (PLGAIGVLAAMIVAPLAAMLV). E201 lines the Zn(2+) pocket. The interval 279 to 328 (QYGGGTGPSVGTPTRSGSTGPAMTANPERKSRSVPNTGRGGSQPPKGPWS) is disordered. Residues 287 to 299 (SVGTPTRSGSTGP) show a composition bias toward low complexity.

It belongs to the peptidase M48B family. It depends on Zn(2+) as a cofactor.

Its subcellular location is the cell inner membrane. This chain is Protease HtpX homolog, found in Rhizobium rhizogenes (strain K84 / ATCC BAA-868) (Agrobacterium radiobacter).